We begin with the raw amino-acid sequence, 431 residues long: Divergent protein kinase domain 1B (431 aa).

Over 1–30 (MRRLRRLVHLVLLCPFSKGLQGRLPGLRVK) the chain is Cytoplasmic. Residues 5–6 (RR) carry the May mediate ER retention motif. The helical transmembrane segment at 31-51 (YVLLVWLGIFVGSWMVYVHYS) threads the bilayer. Residues 52–431 (SYSELCRGHV…WREISNTNYS (380 aa)) lie on the Lumenal side of the membrane. 2 cysteine pairs are disulfide-bonded: Cys-57-Cys-94 and Cys-62-Cys-117.

The protein belongs to the DIPK family. Among the many cysteines in the lumenal domain, most are probably involved in disulfide bonds. Expressed in kidney, testis, lung, heart, stomach, intestine, pancreas, liver and salivary gland. Strongly expressed in acute pancreatitis, brain, and in peripheral endothelial cells.

Its subcellular location is the endoplasmic reticulum membrane. In Mus musculus (Mouse), this protein is Divergent protein kinase domain 1B (Dipk1b).